The following is a 326-amino-acid chain: Phosphate acyltransferase (326 aa).

The protein belongs to the PlsX family. As to quaternary structure, homodimer. Probably interacts with PlsY.

Its subcellular location is the cytoplasm. It carries out the reaction a fatty acyl-[ACP] + phosphate = an acyl phosphate + holo-[ACP]. The protein operates within lipid metabolism; phospholipid metabolism. Its function is as follows. Catalyzes the reversible formation of acyl-phosphate (acyl-PO(4)) from acyl-[acyl-carrier-protein] (acyl-ACP). This enzyme utilizes acyl-ACP as fatty acyl donor, but not acyl-CoA. The chain is Phosphate acyltransferase from Macrococcus caseolyticus (strain JCSC5402) (Macrococcoides caseolyticum).